Consider the following 1165-residue polypeptide: MPNSVLWAVDLFGRVYTLSTAGQYWEMCKDSQLEFKRVSATTQCCWGIACDNQVYVYVCASDVPIRRREEAYENQRWNPMGGFCEKLLLSDRWGWSDVSGLQHRPLDRVALPSPHWEWESDWYVDENFGGEPTEKGGWTYAIDFPATYTKDKKWNSCVRRRKWIRYRRYKSRDIWAKIPSKDDPKELPDPFNDLSVGGWEITEEPVGRLSVWAVSLQGKVWYREDVSHSNPEGSSWSLLDTPGEVVQISCGPHDLLWATLWEGQALVREGINRSNPKGSSWSIVEPPGSENGVMHISVGVSVVWAVTKDWKVWFRRGVNSHNPCGTSWIEMVGEMTMVNVGMNDQVWGIGCEDRAVYFRQGVTPSELSGKTWKAIIAARECDRSHSGSSSSLLSAGCFFGDEVRGSGESAPSDTDASSEVERPGPGQILPAEPLDDSKNATGNSASGLGAGRTAEDTVEDACPAEGSREARPNTHPGPAPTPAELPWTNIDLKEAKKVPSHSAAGFPETTSLSSLGLLPLGLEEPYGVDDHPLWAWVSGGGCVVEACAMPRWFTVQAGLSSSVHMLSLSITPAQTAAWRKQIFQQLTERTKRELENFRHYEQAVEQSVWVKTGALQWWCDWKPHKWVDVRLALEQFTGHDGVRDSILFIYYVVHEEKKYIHIFLNEVVALVPVLNETKHSFALYTPERTRQRWPVRLAAATEQDMNDWLALLSLSCCESRKVQGRPSPQAIWSITCKGDIFVSEPSPDLEAHEHPLPCDQMFWRQMGGHLRMVEANSRGVVWGIGYDHTAWVYTGGYGGGCFQGLASSTSNIYTQSDVKCVHIYENQRWNPVTGYTSRGLPTDRYMWSDASGLQECTKAGTKPPSLQWAWVSDWFVDFSVPGGTDQEGWQYASDFPASYHGSKTMKDFVRRRCWARKCKLVTSGPWLEVPPIALRDVSIIPESPGAEGSGHSIALWAVSDKGDVLCRLGVSELNPAGSSWLHVGTDQPFASISIGACYQVWAVARDGSAFYRGSVYPSQPAGDCWYHIPSPPRQRLKQVSAGQTSVYALDENGNLWYRQGITPSYPQGSSWEHVSNNVCRVSVGPLDQVWVIANKVQGSHSLSRGTVCHRTGVQPHEPKGHGWDYGIGGGWDHISVRANATRAPRSSSQEQEPSAPPEAHGPVCC.

TECPR repeat units lie at residues 209–240, 254–285, 301–332, and 344–376; these read LSVWAVSLQGKVWYREDVSHSNPEGSSWSLLD, DLLWATLWEGQALVREGINRSNPKGSSWSIVE, SVVWAVTKDWKVWFRRGVNSHNPCGTSWIEMV, and DQVWGIGCEDRAVYFRQGVTPSELSGKTWKAII. Phosphoserine is present on residues Ser-386, Ser-388, Ser-391, Ser-412, and Ser-417. Residues 404 to 486 are disordered; the sequence is RGSGESAPSD…GPAPTPAELP (83 aa). The region spanning 611–717 is the PH domain; sequence KTGALQWWCD…WLALLSLSCC (107 aa). One copy of the TECPR 5 repeat lies at 729–756; the sequence is QAIWSITCKGDIFVSEPSPDLEAHEHPL. Ser-938 and Ser-949 each carry phosphoserine. 4 TECPR repeats span residues 953-984, 998-1029, 1044-1075, and 1087-1127; these read IALWAVSDKGDVLCRLGVSELNPAGSSWLHVG, YQVWAVARDGSAFYRGSVYPSQPAGDCWYHIP, TSVYALDENGNLWYRQGITPSYPQGSSWEHVS, and DQVW…DYGI. The segment at 1140 to 1165 is disordered; sequence ATRAPRSSSQEQEPSAPPEAHGPVCC. The segment covering 1143–1153 has biased composition (low complexity); sequence APRSSSQEQEP.

The protein belongs to the TECPR1 family. As to quaternary structure, interacts with ATG5; the interaction is direct. Interacts with WIPI2. Interacts with the ATG5-ATG12 conjugate, the interaction is however mutually exclusive with ATG16, since it does not interact with ATG12-ATG5-ATG16 complex.

It localises to the cytoplasmic vesicle. It is found in the autophagosome membrane. The protein localises to the lysosome membrane. Tethering factor involved in autophagy. Involved in autophagosome maturation by promoting the autophagosome fusion with lysosomes: acts by associating with both the ATG5-ATG12 conjugate and phosphatidylinositol-3-phosphate (PtdIns(3)P) present at the surface of autophagosomes. Also involved in selective autophagy against bacterial pathogens, by being required for phagophore/preautophagosomal structure biogenesis and maturation. The chain is Tectonin beta-propeller repeat-containing protein 1 (TECPR1) from Homo sapiens (Human).